A 137-amino-acid polypeptide reads, in one-letter code: TINYNPQRTRFRKQHRGRMKGISYRGNNICFGRYALQALEPAWITSRQIEAGRRAMSRNVRRGGQIWVRIFPDKPVTVRPTETRMGSGKGFPEYWVAVVKPGKILYEMGGVPENIARKAISIASSKMPIRTQFIISG.

The protein belongs to the universal ribosomal protein uL16 family. In terms of assembly, part of the 50S ribosomal subunit.

The protein localises to the plastid. The protein resides in the chloroplast. The polypeptide is Large ribosomal subunit protein uL16c (Vigna unguiculata (Cowpea)).